The chain runs to 98 residues: NADH-ubiquinone oxidoreductase chain 4L (98 aa).

3 helical membrane passes run Met1 to Met21, Ser29 to Leu49, and Ile61 to Val81.

It belongs to the complex I subunit 4L family. As to quaternary structure, core subunit of respiratory chain NADH dehydrogenase (Complex I) which is composed of 45 different subunits.

The protein localises to the mitochondrion inner membrane. It catalyses the reaction a ubiquinone + NADH + 5 H(+)(in) = a ubiquinol + NAD(+) + 4 H(+)(out). Functionally, core subunit of the mitochondrial membrane respiratory chain NADH dehydrogenase (Complex I) which catalyzes electron transfer from NADH through the respiratory chain, using ubiquinone as an electron acceptor. Part of the enzyme membrane arm which is embedded in the lipid bilayer and involved in proton translocation. This is NADH-ubiquinone oxidoreductase chain 4L (MT-ND4L) from Mesophylla macconnelli (MacConnell's bat).